The following is a 257-amino-acid chain: Hydroxyethylthiazole kinase 1 (257 aa).

Met41 serves as a coordination point for substrate. 2 residues coordinate ATP: Lys117 and Thr162. Gly189 is a substrate binding site.

The protein belongs to the Thz kinase family. The cofactor is Mg(2+).

The enzyme catalyses 5-(2-hydroxyethyl)-4-methylthiazole + ATP = 4-methyl-5-(2-phosphooxyethyl)-thiazole + ADP + H(+). Its pathway is cofactor biosynthesis; thiamine diphosphate biosynthesis; 4-methyl-5-(2-phosphoethyl)-thiazole from 5-(2-hydroxyethyl)-4-methylthiazole: step 1/1. In terms of biological role, catalyzes the phosphorylation of the hydroxyl group of 4-methyl-5-beta-hydroxyethylthiazole (THZ). The polypeptide is Hydroxyethylthiazole kinase 1 (Oceanobacillus iheyensis (strain DSM 14371 / CIP 107618 / JCM 11309 / KCTC 3954 / HTE831)).